The sequence spans 156 residues: Persephin (156 aa).

The first 21 residues, 1 to 21 (MAAGRLRILCLLLLSLHPSLG), serve as a signal peptide directing secretion. 3 cysteine pairs are disulfide-bonded: Cys66–Cys124, Cys93–Cys152, and Cys97–Cys154.

This sequence belongs to the TGF-beta family. GDNF subfamily. In terms of assembly, homodimer; disulfide-linked. Interacts with GFRA4 coreceptor and RET: forms a 2:2:2 ternary complex composed of PSPN ligand, GFRA4 and RET receptor.

It localises to the secreted. Functionally, growth factor that exhibits neurotrophic activity on mesencephalic dopaminergic and motor neurons. Acts by binding to its coreceptor, GFRA4, leading to autophosphorylation and activation of the RET receptor. The polypeptide is Persephin (Mus musculus (Mouse)).